The primary structure comprises 149 residues: Nucleoside diphosphate kinase 1 (149 aa).

Residues lysine 10, phenylalanine 58, arginine 86, threonine 92, arginine 103, and asparagine 113 each coordinate ATP. Histidine 116 (pros-phosphohistidine intermediate) is an active-site residue.

The protein belongs to the NDK family. Requires Mg(2+) as cofactor.

It catalyses the reaction a 2'-deoxyribonucleoside 5'-diphosphate + ATP = a 2'-deoxyribonucleoside 5'-triphosphate + ADP. The catalysed reaction is a ribonucleoside 5'-diphosphate + ATP = a ribonucleoside 5'-triphosphate + ADP. Major role in the synthesis of nucleoside triphosphates other than ATP. The ATP gamma phosphate is transferred to the NDP beta phosphate via a ping-pong mechanism, using a phosphorylated active-site intermediate. This NDK is microtubule-associated. The chain is Nucleoside diphosphate kinase 1 (NDPK1) from Pisum sativum (Garden pea).